The following is a 145-amino-acid chain: Hemoglobin subunit beta-2 (145 aa).

Residues 2–145 (HLTDQEIKYI…VADAVGKGYH (144 aa)) form the Globin domain. Heme b contacts are provided by histidine 63 and histidine 91.

The protein belongs to the globin family. In terms of tissue distribution, red blood cells.

In Telmatobius peruvianus (Andean frog), this protein is Hemoglobin subunit beta-2.